The chain runs to 70 residues: Antimicrobial peptide VpCT1 (70 aa).

An N-terminal signal peptide occupies residues 1 to 23 (MKNQFAVLLVALVLLQLFSQSEA). The residue at position 36 (Leu36) is a Leucine amide. The propeptide occupies 37 to 70 (GKRGLRNFDLEQMDDTYEPELSEADLRYLQDLLR).

It belongs to the non-disulfide-bridged peptide (NDBP) superfamily. Short antimicrobial peptide (group 4) family. In terms of tissue distribution, expressed by the venom gland.

Its subcellular location is the secreted. The protein resides in the target cell membrane. Antimicrobial peptide with potent activity against bacteria S.aureus (MIC=4.7 uM) and E.coli (MIC=31.5 uM), and pathogenic yeasts C.albicans (MIC=25 uM) and C.glabrata (MIC=12.5 uM). Is not very effective against P.aeruginosa (MIC=150 and &gt;300 uM). Also provokes moderate hemolysis on human erythrocytes (HC(50)=10.5 uM). The protein is Antimicrobial peptide VpCT1 of Mesomexovis punctatus (Scorpion).